We begin with the raw amino-acid sequence, 96 residues long: Transcription and mRNA export factor SUS1 (96 aa).

Lysine 68 participates in a covalent cross-link: Glycyl lysine isopeptide (Lys-Gly) (interchain with G-Cter in ubiquitin).

It belongs to the ENY2 family. In terms of assembly, component of the nuclear pore complex (NPC)-associated TREX-2 complex (transcription and export complex 2), composed of at least SUS1, SAC3, THP1, SEM1, and CDC31. TREX-2 contains 2 SUS1 chains. The TREX-2 complex interacts with the nucleoporin NUP1. Component of the 1.8 MDa SAGA transcription coactivator-HAT complex. SAGA is built of 5 distinct domains with specialized functions. Within the SAGA complex, SUS1, SGF11, SGF73 and UBP8 form an additional subcomplex of SAGA called the DUB module (deubiquitination module). Interacts directly with THP1, SAC3, SGF11, and with the RNA polymerase II.

The protein localises to the nucleus. The protein resides in the nucleoplasm. Its subcellular location is the cytoplasm. It is found in the P-body. Its function is as follows. Involved in mRNA export coupled transcription activation by association with both the TREX-2 and the SAGA complexes. At the promoters, SAGA is required for recruitment of the basal transcription machinery. It influences RNA polymerase II transcriptional activity through different activities such as TBP interaction and promoter selectivity, interaction with transcription activators, and chromatin modification through histone acetylation and deubiquitination. Within the SAGA complex, participates in a subcomplex required for deubiquitination of H2B and for the maintenance of steady-state H3 methylation levels. The TREX-2 complex functions in docking export-competent ribonucleoprotein particles (mRNPs) to the nuclear entrance of the nuclear pore complex (nuclear basket). TREX-2 participates in mRNA export and accurate chromatin positioning in the nucleus by tethering genes to the nuclear periphery. May also be involved in cytoplasmic mRNA decay by interaction with components of P-bodies. The sequence is that of Transcription and mRNA export factor SUS1 from Saccharomyces cerevisiae (strain YJM789) (Baker's yeast).